Reading from the N-terminus, the 156-residue chain is Small ribosomal subunit protein uS7 (156 aa).

The protein belongs to the universal ribosomal protein uS7 family. In terms of assembly, part of the 30S ribosomal subunit. Contacts proteins S9 and S11.

In terms of biological role, one of the primary rRNA binding proteins, it binds directly to 16S rRNA where it nucleates assembly of the head domain of the 30S subunit. Is located at the subunit interface close to the decoding center, probably blocks exit of the E-site tRNA. The protein is Small ribosomal subunit protein uS7 of Geobacillus kaustophilus (strain HTA426).